We begin with the raw amino-acid sequence, 397 residues long: Acetate kinase (397 aa).

N7 serves as a coordination point for Mg(2+). K14 contacts ATP. Position 90 (R90) interacts with substrate. The active-site Proton donor/acceptor is D147. ATP contacts are provided by residues 207 to 211 (HLGNG), 282 to 284 (DFR), and 330 to 334 (GLGEN). A Mg(2+)-binding site is contributed by E383.

The protein belongs to the acetokinase family. Homodimer. Requires Mg(2+) as cofactor. Mn(2+) is required as a cofactor.

It is found in the cytoplasm. The enzyme catalyses acetate + ATP = acetyl phosphate + ADP. It participates in metabolic intermediate biosynthesis; acetyl-CoA biosynthesis; acetyl-CoA from acetate: step 1/2. Functionally, catalyzes the formation of acetyl phosphate from acetate and ATP. Can also catalyze the reverse reaction. The polypeptide is Acetate kinase (Clostridium botulinum (strain Langeland / NCTC 10281 / Type F)).